The following is a 122-amino-acid chain: Proteasome assembly chaperone 3 (122 aa).

M1 is subject to N-acetylmethionine.

Belongs to the PSMG3 family. In terms of assembly, homodimer. Interacts directly with alpha and beta subunits of the 20S proteasome but dissociates before the formation of half-proteasomes, probably upon recruitment of POMP. Interacts with PSMG4.

Functionally, chaperone protein which promotes assembly of the 20S proteasome. May cooperate with PSMG1-PSMG2 heterodimers to orchestrate the correct assembly of proteasomes. The polypeptide is Proteasome assembly chaperone 3 (Psmg3) (Mus musculus (Mouse)).